We begin with the raw amino-acid sequence, 34 residues long: Photosystem I reaction center subunit XII (34 aa).

Residues 10 to 32 (IYIALVVAAHAAILALRLSVSLY) form a helical membrane-spanning segment.

This sequence belongs to the PsaM family.

It is found in the cellular thylakoid membrane. The chain is Photosystem I reaction center subunit XII from Synechococcus sp. (strain RCC307).